Here is a 729-residue protein sequence, read N- to C-terminus: Cytoplasmic polyadenylation element-binding protein 4 (729 aa).

Disordered regions lie at residues 20-50 and 78-133; these read FPVR…NNTA and EKAK…KEKL. Positions 24–35 are enriched in basic residues; the sequence is FHPHLQPPHHHQ. Residues 83–96 show a composition bias toward low complexity; the sequence is QQQEQQDPLEKQQL. Phosphoserine occurs at positions 97, 99, and 137. Residues 218–324 are disordered; that stretch reads FGGSFSPQIG…RDHRRGLNGG (107 aa). Basic residues predominate over residues 232–249; it reads HHPHHPHFQHHHSQHQQQ. Ser252 and Ser255 each carry phosphoserine. A compositionally biased stretch (low complexity) spans 285 to 300; that stretch reads WSSYQSPSPTPSSSWS. Over residues 301–311 the composition is skewed to gly residues; it reads PGGGGYGGWGA. Thr326 carries the post-translational modification Phosphothreonine. A phosphoserine mark is found at Ser330 and Ser332. RRM domains are found at residues 472-563 and 580-662; these read RKVF…PWNL and KTIF…PYVL. An RNA-binding region spans residues 541–543; that stretch reads KLY. The Zn(2+) site is built by Cys667, Cys675, Cys684, Cys689, Cys694, Cys697, His702, and His710.

It belongs to the RRM CPEB family. As to quaternary structure, interacts with TOB1. In terms of tissue distribution, highly expressed in brain, including hippocampus, amygdala, granule and Purkinje cells of the cerebellum (at protein level). Expressed in spinal cord (at protein level). Expressed in kidney, lung and heart (at protein level). Expressed in liver (at protein level). Expressed in spleen and testis (at protein level). Weakly expressed in ovary and in granular cells of dentate gyrus and the pyramidal cells of CA3 and CA1 of the hippocampus.

Its subcellular location is the cytoplasm. The protein localises to the cell projection. The protein resides in the dendrite. It is found in the dendritic spine. It localises to the postsynaptic density. Its subcellular location is the axon. The protein localises to the growth cone. The protein resides in the endoplasmic reticulum. It is found in the perinuclear region. Sequence-specific RNA-binding protein that binds to the cytoplasmic polyadenylation element (CPE), an uridine-rich sequence element (consensus sequence 5'-UUUUUAU-3') within the mRNA 3'-UTR. RNA binding results in a clear conformational change analogous to the Venus fly trap mechanism. Regulates activation of unfolded protein response (UPR) in the process of adaptation to ER stress in liver, by maintaining translation of CPE-regulated mRNAs in conditions in which global protein synthesis is inhibited. Required for cell cycle progression, specifically for cytokinesis and chromosomal segregation. Plays a role as an oncogene promoting tumor growth and progression by positively regulating translation of t-plasminogen activator/PLAT. Stimulates proliferation of melanocytes. In contrast to CPEB1 and CPEB3, does not play role in synaptic plasticity, learning and memory. The polypeptide is Cytoplasmic polyadenylation element-binding protein 4 (Cpeb4) (Mus musculus (Mouse)).